The sequence spans 636 residues: uncharacterized protein (636 aa).

The next 3 helical transmembrane spans lie at 12–32 (AVIY…FGSI), 34–54 (IMHL…TTTG), and 75–95 (IGAG…FMSF). The 120-residue stretch at 112–231 (KNHFILCGFG…KKAGANRIIS (120 aa)) folds into the RCK N-terminal domain.

It localises to the cell membrane. This is an uncharacterized protein from Methanothermus fervidus (strain ATCC 43054 / DSM 2088 / JCM 10308 / V24 S).